We begin with the raw amino-acid sequence, 201 residues long: Lipoprotein signal peptidase (201 aa).

The next 2 helical transmembrane spans lie at 73-93 (SNAI…YLMI) and 97-117 (TIGS…NLID). Residues D126 and D144 contribute to the active site. The helical transmembrane segment at 135–155 (YSFPVFNLADCFITIGVIILI) threads the bilayer.

It belongs to the peptidase A8 family.

The protein resides in the cell inner membrane. It carries out the reaction Release of signal peptides from bacterial membrane prolipoproteins. Hydrolyzes -Xaa-Yaa-Zaa-|-(S,diacylglyceryl)Cys-, in which Xaa is hydrophobic (preferably Leu), and Yaa (Ala or Ser) and Zaa (Gly or Ala) have small, neutral side chains.. Its pathway is protein modification; lipoprotein biosynthesis (signal peptide cleavage). Functionally, this protein specifically catalyzes the removal of signal peptides from prolipoproteins. In Rickettsia africae (strain ESF-5), this protein is Lipoprotein signal peptidase.